A 355-amino-acid polypeptide reads, in one-letter code: Guanine nucleotide-binding protein alpha-12 subunit (355 aa).

The 328-residue stretch at 28–355 (RQINLLLLGS…EQNLKTLMMQ (328 aa)) folds into the G-alpha domain. The tract at residues 31–44 (NLLLLGSGESGKST) is G1 motif. Residues 36 to 43 (GSGESGKS), 176 to 182 (LFCRKAT), 201 to 205 (DVGGQ), 270 to 273 (NKND), and Ala-327 each bind GTP. Mg(2+)-binding residues include Ser-43 and Thr-182. Residues 174-182 (DILFCRKAT) are G2 motif. Positions 197-206 (FRFIDVGGQR) are G3 motif. A G4 motif region spans residues 266–273 (ILFMNKND). Residues 325 to 330 (TTAVDT) are G5 motif.

The protein belongs to the G-alpha family. In terms of assembly, g proteins are composed of 3 units; alpha, beta and gamma. The alpha chain contains the guanine nucleotide binding site.

Guanine nucleotide-binding proteins (G proteins) are involved as modulators or transducers in various transmembrane signaling systems. May play a role in resistance to fungal infection in the epidermis by regulating the up-regulation of several antimicrobial peptides of the NLP and CNC families. Upstream of plc-3, egl-8, tpa-1 and the p38-like pathway, required for the expression of antimicrobial peptide nlp-29 in the epidermis in response to fungal infection or physical injury. In Caenorhabditis briggsae, this protein is Guanine nucleotide-binding protein alpha-12 subunit (gpa-12).